We begin with the raw amino-acid sequence, 205 residues long: NADH-quinone oxidoreductase subunit C (205 aa).

Belongs to the complex I 30 kDa subunit family. As to quaternary structure, NDH-1 is composed of 14 different subunits. Subunits NuoB, C, D, E, F, and G constitute the peripheral sector of the complex.

The protein localises to the cell inner membrane. It catalyses the reaction a quinone + NADH + 5 H(+)(in) = a quinol + NAD(+) + 4 H(+)(out). Functionally, NDH-1 shuttles electrons from NADH, via FMN and iron-sulfur (Fe-S) centers, to quinones in the respiratory chain. The immediate electron acceptor for the enzyme in this species is believed to be ubiquinone. Couples the redox reaction to proton translocation (for every two electrons transferred, four hydrogen ions are translocated across the cytoplasmic membrane), and thus conserves the redox energy in a proton gradient. In Bartonella bacilliformis (strain ATCC 35685 / KC583 / Herrer 020/F12,63), this protein is NADH-quinone oxidoreductase subunit C.